Reading from the N-terminus, the 223-residue chain is UPF0441 protein YgiB (223 aa).

Residues 178–195 (TVPKTAMAPKPATTTTVT) are compositionally biased toward low complexity. Residues 178–223 (TVPKTAMAPKPATTTTVTRGGFGESVAKQSTMQRSATGTSSRSMGG) form a disordered region. Positions 204–223 (AKQSTMQRSATGTSSRSMGG) are enriched in polar residues.

The protein belongs to the UPF0441 family.

The sequence is that of UPF0441 protein YgiB from Shigella dysenteriae serotype 1 (strain Sd197).